Here is a 288-residue protein sequence, read N- to C-terminus: Pyridoxal kinase PdxY (288 aa).

Residues Ser12 and 47 to 48 (TQ) each bind substrate. ATP-binding positions include Asp114, Glu151, Lys184, and 211 to 214 (RPLL). A substrate-binding site is contributed by Asp225.

The protein belongs to the pyridoxine kinase family. PdxY subfamily. Homodimer. Mg(2+) serves as cofactor.

It catalyses the reaction pyridoxal + ATP = pyridoxal 5'-phosphate + ADP + H(+). It participates in cofactor metabolism; pyridoxal 5'-phosphate salvage; pyridoxal 5'-phosphate from pyridoxal: step 1/1. In terms of biological role, pyridoxal kinase involved in the salvage pathway of pyridoxal 5'-phosphate (PLP). Catalyzes the phosphorylation of pyridoxal to PLP. The chain is Pyridoxal kinase PdxY from Pseudomonas syringae pv. tomato (strain ATCC BAA-871 / DC3000).